A 223-amino-acid polypeptide reads, in one-letter code: Rab-like protein 2A (223 aa).

GTP-binding positions include 28–35 (GDSAVGKS), 76–80 (DTAGQ), and 133–136 (NKID). The segment at 200–223 (KLEQKEEDTSGQEQSDTTKSPSPS) is disordered. The segment covering 210-223 (GQEQSDTTKSPSPS) has biased composition (polar residues).

This sequence belongs to the small GTPase superfamily. Rab family. As to quaternary structure, interacts with IFT27, IFT81, IFT172, ATP6V1E1, HK1, LDHC, MAPRE1 and HSPA2. Isoform 2 is expressed in the testis and localizes to the mid-piece of the sperm tail (at protein level). Isoform 2 is expressed at higher levels in testis than isoform 1. Isoform 1 and isoform 2 are widely expressed and notably within other tissues containing motile cilia including the lung, trachea, brain, ovary and kidney.

In terms of biological role, plays an essential role in male fertility, sperm intra-flagellar transport, and tail assembly. Binds, in a GTP-regulated manner, to a specific set of effector proteins including key proteins involved in cilia development and function and delivers them into the growing sperm tail. The sequence is that of Rab-like protein 2A (Rabl2) from Mus musculus (Mouse).